A 422-amino-acid chain; its full sequence is Receptor homology region, transmembrane domain- and RING domain-containing protein 3 (422 aa).

The first 22 residues, Met1 to Ala22, serve as a signal peptide directing secretion. Residues Gly23–Tyr168 are Lumenal-facing. Asn31 is a glycosylation site (N-linked (GlcNAc...) asparagine). A disulfide bridge links Cys64 with Cys89. The 66-residue stretch at Leu81–Ala146 folds into the PA domain. A helical membrane pass occupies residues Ala169–Phe189. Residues Tyr190–Asp422 lie on the Cytoplasmic side of the membrane. Residues Cys232 to Lys274 form an RING-type; atypical zinc finger. The segment at Leu344 to Leu368 is disordered. Residues Ser349–Leu368 are compositionally biased toward polar residues.

It localises to the prevacuolar compartment membrane. The protein resides in the protein storage vacuole membrane. Involved in the trafficking of vacuolar proteins. May function as a sorting receptor for protein trafficking to the protein storage vacuole (PSV). This chain is Receptor homology region, transmembrane domain- and RING domain-containing protein 3 (RMR3), found in Arabidopsis thaliana (Mouse-ear cress).